The chain runs to 473 residues: LEC14B protein (473 aa).

WD repeat units follow at residues 212–242, 254–285, 301–331, 377–413, and 425–455; these read GYSF…CVYD, AHES…KVWD, GHLE…KLWD, GHSV…YIYD, and YHKA…VKWE.

Belongs to the WD repeat LEC14B family.

The sequence is that of LEC14B protein from Lithospermum erythrorhizon (Purple gromwell).